Consider the following 196-residue polypeptide: Molybdopterin synthase catalytic subunit (196 aa).

The tract at residues 1–29 is disordered; it reads MSTLPSTDPPPLPASTSSQQPAVHIPPPS. Substrate is bound by residues 145-146, K161, and 168-170; these read HR and KRE. The interval 174–196 is disordered; it reads GEPPGQGEWRANRDTDPEGKSTS. Over residues 183–196 the composition is skewed to basic and acidic residues; it reads RANRDTDPEGKSTS.

It belongs to the MoaE family. MOCS2B subfamily. Heterotetramer; composed of 2 small (MOCS2A) and 2 large (MOCS2B) subunits.

Its subcellular location is the cytoplasm. It catalyses the reaction 2 [molybdopterin-synthase sulfur-carrier protein]-C-terminal-Gly-aminoethanethioate + cyclic pyranopterin phosphate + H2O = molybdopterin + 2 [molybdopterin-synthase sulfur-carrier protein]-C-terminal Gly-Gly + 2 H(+). It functions in the pathway cofactor biosynthesis; molybdopterin biosynthesis. Functionally, catalytic subunit of the molybdopterin synthase complex, a complex that catalyzes the conversion of precursor Z into molybdopterin. Acts by mediating the incorporation of 2 sulfur atoms from thiocarboxylated MOCS2A into precursor Z to generate a dithiolene group. The chain is Molybdopterin synthase catalytic subunit from Coccidioides immitis (strain RS) (Valley fever fungus).